Reading from the N-terminus, the 586-residue chain is Arginine--tRNA ligase (586 aa).

The short motif at 128-138 (ANPTGPLHVGH) is the 'HIGH' region element.

This sequence belongs to the class-I aminoacyl-tRNA synthetase family. In terms of assembly, monomer.

It is found in the cytoplasm. It catalyses the reaction tRNA(Arg) + L-arginine + ATP = L-arginyl-tRNA(Arg) + AMP + diphosphate. In Coxiella burnetii (strain RSA 331 / Henzerling II), this protein is Arginine--tRNA ligase.